Consider the following 273-residue polypeptide: 4-hydroxy-tetrahydrodipicolinate reductase (273 aa).

NAD(+) is bound by residues 12–17 (GAGGRM) and Glu38. Arg39 serves as a coordination point for NADP(+). NAD(+)-binding positions include 102–104 (GTT) and 126–129 (AANF). The active-site Proton donor/acceptor is His159. His160 lines the (S)-2,3,4,5-tetrahydrodipicolinate pocket. Lys163 functions as the Proton donor in the catalytic mechanism. 169-170 (GT) lines the (S)-2,3,4,5-tetrahydrodipicolinate pocket.

This sequence belongs to the DapB family. As to quaternary structure, homotetramer.

Its subcellular location is the cytoplasm. It catalyses the reaction (S)-2,3,4,5-tetrahydrodipicolinate + NAD(+) + H2O = (2S,4S)-4-hydroxy-2,3,4,5-tetrahydrodipicolinate + NADH + H(+). The catalysed reaction is (S)-2,3,4,5-tetrahydrodipicolinate + NADP(+) + H2O = (2S,4S)-4-hydroxy-2,3,4,5-tetrahydrodipicolinate + NADPH + H(+). The protein operates within amino-acid biosynthesis; L-lysine biosynthesis via DAP pathway; (S)-tetrahydrodipicolinate from L-aspartate: step 4/4. Its function is as follows. Catalyzes the conversion of 4-hydroxy-tetrahydrodipicolinate (HTPA) to tetrahydrodipicolinate. This Shigella boydii serotype 18 (strain CDC 3083-94 / BS512) protein is 4-hydroxy-tetrahydrodipicolinate reductase.